We begin with the raw amino-acid sequence, 173 residues long: 6,7-dimethyl-8-ribityllumazine synthase (173 aa).

5-amino-6-(D-ribitylamino)uracil is bound by residues Phe-24, 58–60 (ALE), and 82–84 (AVI). A (2S)-2-hydroxy-3-oxobutyl phosphate-binding site is contributed by 87 to 88 (ET). The active-site Proton donor is the His-90. 5-amino-6-(D-ribitylamino)uracil is bound at residue Asn-115. Arg-129 provides a ligand contact to (2S)-2-hydroxy-3-oxobutyl phosphate. A disordered region spans residues 150–173 (TLDQLSDDEEDEEDEDDEDEEERA). Positions 154-173 (LSDDEEDEEDEDDEDEEERA) are enriched in acidic residues.

Belongs to the DMRL synthase family.

The catalysed reaction is (2S)-2-hydroxy-3-oxobutyl phosphate + 5-amino-6-(D-ribitylamino)uracil = 6,7-dimethyl-8-(1-D-ribityl)lumazine + phosphate + 2 H2O + H(+). It participates in cofactor biosynthesis; riboflavin biosynthesis; riboflavin from 2-hydroxy-3-oxobutyl phosphate and 5-amino-6-(D-ribitylamino)uracil: step 1/2. Functionally, catalyzes the formation of 6,7-dimethyl-8-ribityllumazine by condensation of 5-amino-6-(D-ribitylamino)uracil with 3,4-dihydroxy-2-butanone 4-phosphate. This is the penultimate step in the biosynthesis of riboflavin. The chain is 6,7-dimethyl-8-ribityllumazine synthase from Burkholderia mallei (strain NCTC 10247).